The following is a 31-amino-acid chain: Photosystem II reaction center protein T (31 aa).

At Met1 the chain carries N-formylmethionine. A helical membrane pass occupies residues 3–23 (SVAYILVLTMALAVLFFAIAF).

It belongs to the PsbT family. PSII is composed of 1 copy each of membrane proteins PsbA, PsbB, PsbC, PsbD, PsbE, PsbF, PsbH, PsbI, PsbJ, PsbK, PsbL, PsbM, PsbT, PsbX, PsbY, PsbZ, Psb30/Ycf12, peripheral proteins PsbO, CyanoQ (PsbQ), PsbU, PsbV and a large number of cofactors. It forms dimeric complexes.

It is found in the cellular thylakoid membrane. Functionally, found at the monomer-monomer interface of the photosystem II (PS II) dimer, plays a role in assembly and dimerization of PSII. PSII is a light-driven water plastoquinone oxidoreductase, using light energy to abstract electrons from H(2)O, generating a proton gradient subsequently used for ATP formation. This is Photosystem II reaction center protein T from Synechocystis sp. (strain ATCC 27184 / PCC 6803 / Kazusa).